The sequence spans 556 residues: Endoplasmic reticulum membrane protein 65 (556 aa).

Topologically, residues 1-87 are cytoplasmic; that stretch reads MQHKDTAVAK…IRIPMFLEKF (87 aa). Ser22 carries the post-translational modification Phosphoserine. A helical membrane pass occupies residues 88-108; it reads MLFALLTSLDCFLYYFTVLPI. Topologically, residues 109–151 are lumenal; the sequence is RLIKGYVKQFKSYRQHYRLQQRSGHKNKIPFRYRITSREYKER. A helical transmembrane segment spans residues 152–172; sequence CMIFIIVISSILLSKLDTSKL. The Cytoplasmic portion of the chain corresponds to 173-224; the sequence is YHRIKRQSTMKLYMLFSVLEMADKMLASLGQSLLTVMLSRKNSERILLHKCL. Residues 225 to 245 form a helical membrane-spanning segment; that stretch reads LVSMSLTYVTIHGYVLVYQAI. Topologically, residues 246-330 are lumenal; sequence SLNIAVNSYS…INFWSPRSTL (85 aa). An N-linked (GlcNAc...) asparagine glycan is attached at Asn318. A helical membrane pass occupies residues 331-351; the sequence is SIVINILCGPMVSVVGSEVLV. Topologically, residues 352 to 391 are cytoplasmic; that stretch reads DWAKHAYITKFNRIRPQIYDKFYYIIYKDYSTRTHKLEDR. Residues 392–412 form a helical membrane-spanning segment; sequence LGLPLPAFVVLFIVMVRPTLF. Residues 413–428 lie on the Lumenal side of the membrane; the sequence is KSSEPSYLPSLFRILF. Residues 429–449 traverse the membrane as a helical segment; sequence MGASVFLLALLAKFTLDLILI. Residues 450–556 lie on the Cytoplasmic side of the membrane; it reads KWSKRIEQRF…RYKMVSKRIW (107 aa).

It belongs to the TAPT1 family. As to quaternary structure, interacts with SLP1.

It is found in the endoplasmic reticulum membrane. The protein localises to the mitochondrion. Functionally, may be involved in membrane protein folding. The sequence is that of Endoplasmic reticulum membrane protein 65 from Saccharomyces cerevisiae (strain ATCC 204508 / S288c) (Baker's yeast).